The primary structure comprises 222 residues: Fibrillarin-like rRNA/tRNA 2'-O-methyltransferase (222 aa).

S-adenosyl-L-methionine is bound by residues 86–87 (TT), 104–105 (EV), 129–130 (DA), and 149–152 (DISQ).

It belongs to the methyltransferase superfamily. Fibrillarin family. Interacts with nop5. Component of box C/D small ribonucleoprotein (sRNP) particles that contain rpl7ae, FlpA and nop5, plus a guide RNA.

Involved in pre-rRNA and tRNA processing. Utilizes the methyl donor S-adenosyl-L-methionine to catalyze the site-specific 2'-hydroxyl methylation of ribose moieties in rRNA and tRNA. Site specificity is provided by a guide RNA that base pairs with the substrate. Methylation occurs at a characteristic distance from the sequence involved in base pairing with the guide RNA. This is Fibrillarin-like rRNA/tRNA 2'-O-methyltransferase from Thermoplasma volcanium (strain ATCC 51530 / DSM 4299 / JCM 9571 / NBRC 15438 / GSS1).